The primary structure comprises 264 residues: Glutamate racemase (264 aa).

Substrate-binding positions include 10–11 (DS) and 42–43 (YG). The active-site Proton donor/acceptor is C73. Position 74 to 75 (74 to 75 (NT)) interacts with substrate. Catalysis depends on C183, which acts as the Proton donor/acceptor. A substrate-binding site is contributed by 184-185 (TH).

Belongs to the aspartate/glutamate racemases family.

It carries out the reaction L-glutamate = D-glutamate. It functions in the pathway cell wall biogenesis; peptidoglycan biosynthesis. Its function is as follows. Provides the (R)-glutamate required for cell wall biosynthesis. The protein is Glutamate racemase of Streptococcus agalactiae serotype III (strain NEM316).